The sequence spans 540 residues: Probable ATP-dependent RNA helicase DDX28 (540 aa).

A Mitochondrial targeting signal motif is present at residues 3–18 (LTRPVRLFSLVTRLLL). The short motif at 126 to 156 (GSFADLGLEPRVLHALQEAAPEVVQPTTVQS) is the Q motif element. One can recognise a Helicase ATP-binding domain in the interval 159–351 (IPSLLRGRHV…NKVASPDAVT (193 aa)). 172–179 (AETGSGKT) lines the ATP pocket. The Nuclear export signal signature appears at 180–191 (LSYLLPLLQRLL). A DEAD motif is present at residues 286–289 (DEAD). A Helicase C-terminal domain is found at 377 to 536 (KVAELVHILK…GLASSVKEPL (160 aa)). Residues 520–523 (RRRR) carry the Nuclear localization signal motif.

This sequence belongs to the DEAD box helicase family. Monomer. Found in a complex with GRSF1, DHX30, FASTKD2 and FASTKD5. Associates with the 16S mitochondrial rRNA (16S mt-rRNA) and with the mitochondrial ribosome large subunit (39S). In terms of tissue distribution, expressed in all tissues tested, including brain, placenta, lung, liver, skeletal muscle, kidney, pancreas, leukocytes, colon, small intestine, ovary and prostate.

Its subcellular location is the nucleus. The protein resides in the mitochondrion. It localises to the mitochondrion matrix. The protein localises to the mitochondrion nucleoid. The enzyme catalyses ATP + H2O = ADP + phosphate + H(+). In terms of biological role, plays an essential role in facilitating the proper assembly of the mitochondrial large ribosomal subunit and its helicase activity is essential for this function. May be involved in RNA processing or transport. Has RNA and Mg(2+)-dependent ATPase activity. This is Probable ATP-dependent RNA helicase DDX28 (DDX28) from Homo sapiens (Human).